A 460-amino-acid polypeptide reads, in one-letter code: A-type ATP synthase subunit B (460 aa).

Belongs to the ATPase alpha/beta chains family. As to quaternary structure, has multiple subunits with at least A(3), B(3), C, D, E, F, H, I and proteolipid K(x).

It is found in the cell membrane. Functionally, component of the A-type ATP synthase that produces ATP from ADP in the presence of a proton gradient across the membrane. The B chain is a regulatory subunit. This Methanosarcina barkeri protein is A-type ATP synthase subunit B.